The primary structure comprises 284 residues: 4-diphosphocytidyl-2-C-methyl-D-erythritol kinase (284 aa).

The active site involves Lys-14. ATP is bound at residue 98 to 108 (PMGGGIGGGSS). Asp-140 is an active-site residue.

Belongs to the GHMP kinase family. IspE subfamily.

The enzyme catalyses 4-CDP-2-C-methyl-D-erythritol + ATP = 4-CDP-2-C-methyl-D-erythritol 2-phosphate + ADP + H(+). It functions in the pathway isoprenoid biosynthesis; isopentenyl diphosphate biosynthesis via DXP pathway; isopentenyl diphosphate from 1-deoxy-D-xylulose 5-phosphate: step 3/6. Catalyzes the phosphorylation of the position 2 hydroxy group of 4-diphosphocytidyl-2C-methyl-D-erythritol. The polypeptide is 4-diphosphocytidyl-2-C-methyl-D-erythritol kinase (Shewanella woodyi (strain ATCC 51908 / MS32)).